We begin with the raw amino-acid sequence, 533 residues long: 2-isopropylmalate synthase (533 aa).

Residues 8–270 (VIIFDTTLRD…YFNPFLGRPA (263 aa)) form the Pyruvate carboxyltransferase domain. D17, H209, H211, and N245 together coordinate Mn(2+). The regulatory domain stretch occupies residues 409 to 533 (RLELVQVSCG…KEKTPEMLQV (125 aa)).

This sequence belongs to the alpha-IPM synthase/homocitrate synthase family. LeuA type 1 subfamily. As to quaternary structure, homodimer. Requires Mn(2+) as cofactor.

It is found in the cytoplasm. It catalyses the reaction 3-methyl-2-oxobutanoate + acetyl-CoA + H2O = (2S)-2-isopropylmalate + CoA + H(+). It functions in the pathway amino-acid biosynthesis; L-leucine biosynthesis; L-leucine from 3-methyl-2-oxobutanoate: step 1/4. Its function is as follows. Catalyzes the condensation of the acetyl group of acetyl-CoA with 3-methyl-2-oxobutanoate (2-ketoisovalerate) to form 3-carboxy-3-hydroxy-4-methylpentanoate (2-isopropylmalate). In Microcystis aeruginosa, this protein is 2-isopropylmalate synthase.